Reading from the N-terminus, the 363-residue chain is Phosphoserine aminotransferase (363 aa).

Arg42 provides a ligand contact to L-glutamate. Pyridoxal 5'-phosphate-binding positions include 76-77, Trp101, Thr151, Asp170, and Gln193; that span reads AS. Lys194 is modified (N6-(pyridoxal phosphate)lysine). 234-235 contributes to the pyridoxal 5'-phosphate binding site; sequence NT.

It belongs to the class-V pyridoxal-phosphate-dependent aminotransferase family. SerC subfamily. In terms of assembly, homodimer. It depends on pyridoxal 5'-phosphate as a cofactor.

Its subcellular location is the cytoplasm. It catalyses the reaction O-phospho-L-serine + 2-oxoglutarate = 3-phosphooxypyruvate + L-glutamate. The catalysed reaction is 4-(phosphooxy)-L-threonine + 2-oxoglutarate = (R)-3-hydroxy-2-oxo-4-phosphooxybutanoate + L-glutamate. It functions in the pathway amino-acid biosynthesis; L-serine biosynthesis; L-serine from 3-phospho-D-glycerate: step 2/3. Functionally, catalyzes the reversible conversion of 3-phosphohydroxypyruvate to phosphoserine and of 3-hydroxy-2-oxo-4-phosphonooxybutanoate to phosphohydroxythreonine. This Listeria monocytogenes serovar 1/2a (strain ATCC BAA-679 / EGD-e) protein is Phosphoserine aminotransferase.